A 372-amino-acid polypeptide reads, in one-letter code: Aminomethyltransferase (372 aa).

It belongs to the GcvT family. The glycine cleavage system is composed of four proteins: P, T, L and H.

The enzyme catalyses N(6)-[(R)-S(8)-aminomethyldihydrolipoyl]-L-lysyl-[protein] + (6S)-5,6,7,8-tetrahydrofolate = N(6)-[(R)-dihydrolipoyl]-L-lysyl-[protein] + (6R)-5,10-methylene-5,6,7,8-tetrahydrofolate + NH4(+). Functionally, the glycine cleavage system catalyzes the degradation of glycine. This is Aminomethyltransferase from Streptomyces coelicolor (strain ATCC BAA-471 / A3(2) / M145).